The primary structure comprises 324 residues: Beta-ketoacyl-[acyl-carrier-protein] synthase III (324 aa).

Active-site residues include cysteine 114 and histidine 251. An ACP-binding region spans residues 252–256; that stretch reads QANRR. Asparagine 281 is a catalytic residue.

This sequence belongs to the thiolase-like superfamily. FabH family. As to quaternary structure, homodimer.

The protein localises to the cytoplasm. It catalyses the reaction malonyl-[ACP] + acetyl-CoA + H(+) = 3-oxobutanoyl-[ACP] + CO2 + CoA. Its pathway is lipid metabolism; fatty acid biosynthesis. Catalyzes the condensation reaction of fatty acid synthesis by the addition to an acyl acceptor of two carbons from malonyl-ACP. Catalyzes the first condensation reaction which initiates fatty acid synthesis and may therefore play a role in governing the total rate of fatty acid production. Possesses both acetoacetyl-ACP synthase and acetyl transacylase activities. Its substrate specificity determines the biosynthesis of branched-chain and/or straight-chain of fatty acids. The chain is Beta-ketoacyl-[acyl-carrier-protein] synthase III from Paramagnetospirillum magneticum (strain ATCC 700264 / AMB-1) (Magnetospirillum magneticum).